We begin with the raw amino-acid sequence, 142 residues long: FAD synthase (142 aa).

ATP is bound by residues 9–10 (TF), 14–17 (HPGH), and aspartate 92.

It belongs to the archaeal FAD synthase family. As to quaternary structure, homodimer. The cofactor is a divalent metal cation.

It carries out the reaction FMN + ATP + H(+) = FAD + diphosphate. It participates in cofactor biosynthesis; FAD biosynthesis; FAD from FMN: step 1/1. In terms of biological role, catalyzes the transfer of the AMP portion of ATP to flavin mononucleotide (FMN) to produce flavin adenine dinucleotide (FAD) coenzyme. This Halalkalicoccus jeotgali (strain DSM 18796 / CECT 7217 / JCM 14584 / KCTC 4019 / B3) protein is FAD synthase.